The following is a 680-amino-acid chain: Pescadillo homolog (680 aa).

The segment at 310-330 (LDQAKDEQTAETTEESSDTID) is disordered. The region spanning 351–470 (QAGSLFAPFT…KLVRPDLYSP (120 aa)) is the BRCT domain. The tract at residues 472-680 (ATLPPHLSPW…RRKLEKGAAK (209 aa)) is disordered. Residues 496–523 (AEQEEEGEAEMAEDSDEEMEEAADEKSK) adopt a coiled-coil conformation. Acidic residues predominate over residues 497–518 (EQEEEGEAEMAEDSDEEMEEAA). Positions 519 to 529 (DEKSKTASKDE) are enriched in basic and acidic residues. Composition is skewed to acidic residues over residues 530–543 (AESE…DESV) and 551–585 (GTDD…DEEE). A compositionally biased stretch (basic and acidic residues) spans 586 to 596 (VARTQHQKELE). Residues 613 to 680 (ASKKKASQAK…RRKLEKGAAK (68 aa)) adopt a coiled-coil conformation. Basic residues predominate over residues 616 to 628 (KKASQAKKIAAKK). Basic and acidic residues predominate over residues 629-639 (RKEEEEIERQK).

Belongs to the pescadillo family. As to quaternary structure, component of the NOP7 complex, composed of erb1, nop7 and ytm1. The complex is held together by erb1, which interacts with nop7 via its N-terminal domain and with ytm1 via a high-affinity interaction between the seven-bladed beta-propeller domains of the 2 proteins. The NOP7 complex associates with the 66S pre-ribosome.

Its subcellular location is the nucleus. The protein localises to the nucleolus. The protein resides in the nucleoplasm. Component of the NOP7 complex, which is required for maturation of the 25S and 5.8S ribosomal RNAs and formation of the 60S ribosome. In Aspergillus clavatus (strain ATCC 1007 / CBS 513.65 / DSM 816 / NCTC 3887 / NRRL 1 / QM 1276 / 107), this protein is Pescadillo homolog (nop7).